Consider the following 385-residue polypeptide: Protein pelota homolog (385 aa).

K162 participates in a covalent cross-link: Glycyl lysine isopeptide (Lys-Gly) (interchain with G-Cter in SUMO2). 4 positions are modified to phosphoserine: S374, S380, S381, and S382.

Belongs to the eukaryotic release factor 1 family. Pelota subfamily. Component of the Pelota-HBS1L complex, also named Dom34-Hbs1 complex, composed of PELO and HBS1L. Interacts with PINK1. Interacts with ABCE1. Interacts with CNOT4. A divalent metal cation serves as cofactor.

It is found in the cytoplasm. Component of the Pelota-HBS1L complex, a complex that recognizes stalled ribosomes and triggers the No-Go Decay (NGD) pathway. In the Pelota-HBS1L complex, PELO recognizes ribosomes stalled at the 3' end of an mRNA and engages stalled ribosomes by destabilizing mRNA in the mRNA channel. Following mRNA extraction from stalled ribosomes by the SKI complex, the Pelota-HBS1L complex promotes recruitment of ABCE1, which drives the disassembly of stalled ribosomes, followed by degradation of damaged mRNAs as part of the NGD pathway. As part of the PINK1-regulated signaling, upon mitochondrial damage is recruited to the ribosome/mRNA-ribonucleoprotein complex associated to mitochondrial outer membrane thereby enabling the recruitment of autophagy receptors and induction of mitophagy. This Rattus norvegicus (Rat) protein is Protein pelota homolog (Pelo).